The chain runs to 420 residues: D-tagatose-1,6-bisphosphate aldolase subunit GatZ (420 aa).

It belongs to the GatZ/KbaZ family. GatZ subfamily. As to quaternary structure, forms a complex with GatY.

Its pathway is carbohydrate metabolism; D-tagatose 6-phosphate degradation; D-glyceraldehyde 3-phosphate and glycerone phosphate from D-tagatose 6-phosphate: step 2/2. Functionally, component of the tagatose-1,6-bisphosphate aldolase GatYZ that is required for full activity and stability of the Y subunit. Could have a chaperone-like function for the proper and stable folding of GatY. When expressed alone, GatZ does not show any aldolase activity. Is involved in the catabolism of galactitol. The polypeptide is D-tagatose-1,6-bisphosphate aldolase subunit GatZ (Escherichia coli (strain SMS-3-5 / SECEC)).